A 361-amino-acid chain; its full sequence is Ribosomal RNA large subunit methyltransferase M (361 aa).

Residues Ser-190, 223–226, Asp-242, Asp-262, and Asp-280 each bind S-adenosyl-L-methionine; that span reads CPGG. Lys-309 functions as the Proton acceptor in the catalytic mechanism.

It belongs to the class I-like SAM-binding methyltransferase superfamily. RNA methyltransferase RlmE family. RlmM subfamily. Monomer.

The protein localises to the cytoplasm. The enzyme catalyses cytidine(2498) in 23S rRNA + S-adenosyl-L-methionine = 2'-O-methylcytidine(2498) in 23S rRNA + S-adenosyl-L-homocysteine + H(+). Functionally, catalyzes the 2'-O-methylation at nucleotide C2498 in 23S rRNA. In Actinobacillus pleuropneumoniae serotype 7 (strain AP76), this protein is Ribosomal RNA large subunit methyltransferase M.